Here is a 100-residue protein sequence, read N- to C-terminus: A-type ATP synthase subunit F (100 aa).

Belongs to the V-ATPase F subunit family. As to quaternary structure, has multiple subunits with at least A(3), B(3), C, D, E, F, H, I and proteolipid K(x).

Its subcellular location is the cell membrane. Functionally, component of the A-type ATP synthase that produces ATP from ADP in the presence of a proton gradient across the membrane. This is A-type ATP synthase subunit F from Methanospirillum hungatei JF-1 (strain ATCC 27890 / DSM 864 / NBRC 100397 / JF-1).